The following is a 366-amino-acid chain: Box C/D snoRNA protein 1 (366 aa).

Residues cysteine 5, cysteine 8, cysteine 17, cysteine 20, cysteine 25, cysteine 29, histidine 33, and cysteine 39 each contribute to the Zn(2+) site. The segment at 5–39 adopts an HIT-type zinc-finger fold; that stretch reads CGVCGIKEFKYKCPRCLVQTCSLECSKKHKTRDNC. Residues 318-366 are disordered; the sequence is DNAREEEDAEEDSQPTEEPVQKETQDASDSDSDSDDDYNPGLSMDFLTA. Composition is skewed to acidic residues over residues 321–332 and 343–355; these read REEEDAEEDSQP and DASD…DDDY. Phosphoserine is present on serine 330.

The protein belongs to the BCD1 family.

The protein resides in the nucleus. Its function is as follows. Required for box C/D snoRNAs accumulation involved in snoRNA processing, snoRNA transport to the nucleolus and ribosome biogenesis. The protein is Box C/D snoRNA protein 1 (BCD1) of Saccharomyces cerevisiae (strain ATCC 204508 / S288c) (Baker's yeast).